The chain runs to 492 residues: MGLSSAAAGEGPQLCVFDLRRGQQEGQELDKILFFHPTDCPILLQLSVIGLCEGIITFARIFSPDDDCEVIESEKHSHVFYQAEADIWMVLVVEKNKDIESTWRCGALQGILKEVHSLFTMFHGPIRTLLDRQPSAELARGHLRTFFTDYLSDFNAGKKIQLPTFRDCLKERGTVQMLTISREVALEVQSLTTVLGSCLGNVMCQSLVLFEDLLVSTTLPPDDTLNLYTYAILRLTPRALLSNATSWSYLRKGTSVHAGPTSSSSNGTASVERPLQREKLYKGKDGFVAAGSTTSEVRGAVAWVPILWFQQAEDRMHLCVYQHKNITILLLIPASSLINGDDGIAHVKRHLLENASQNIVTLELKLSRGWGGENAYHVGGYRYLLVDPDRKVSRASPPGKVTTLSKDSLLSLNRLREEIDLEKSRAKRSDSCHDKDFEVCIRAKNNAWVIAKVTRGRELYMALEKAGETLLYASTAIEKFSNRYCEGAFSTD.

Residues 255 to 275 (SVHAGPTSSSSNGTASVERPL) form a disordered region. The span at 260–269 (PTSSSSNGTA) shows a compositional bias: polar residues.

Belongs to the CCZ1 family. In terms of assembly, interacts with MON1.

The protein localises to the endosome. It is found in the prevacuolar compartment. Its function is as follows. Plays an important role in membrane trafficking through the secretory apparatus. In complex with MON1, acts as a guanine exchange factor (GEF) for Rab7 protein family. Promotes the exchange of GDP to GTP, converting it from an inactive GDP-bound form into an active GTP-bound form. The active form is involved in protein trafficking from prevacuolar compartments (PVCs) to vacuoles. May serve as a linker between Rab5 and Rab7 protein families in PVCs and mediate PVC maturation. This is Vacuolar fusion protein CCZ1 homolog from Oryza sativa subsp. japonica (Rice).